Reading from the N-terminus, the 379-residue chain is MTSETSVNLLDFDAEGLVAYCGSLGEKPFRAKQLQRWIHQYNAGDFDGMTDLAKSLREKLKGRASIVMPDIASDHVSTDGTRKWLIDVGNGNAVETVFIPEETRGTLCVSSQAGCAVNCRFCSTGKQGFSRNLSTAEIIGQLRMAEFALRASLGRAPGPNGKAERVVTNVVMMGMGEPLLNYSAVVPAMRLMLDDNAYGLSRRRVTLSTSGVVPMMDRLGAELPVALAVSLHAPNDALRDELVPLNKKYPLRELMAACQRYLKVAPRDFITFEYCMLDGVNDTEAHARELLAVTRDVPCKFNLIPFNPFPESGLIRSKPEQIKRFAQVLIDAGVVTTVRKTRGDDIDAACGQLAGAVKDRTRLAERTGAAGKIIEVRAV.

The active-site Proton acceptor is the glutamate 95. The Radical SAM core domain occupies 101–345 (EETRGTLCVS…TTVRKTRGDD (245 aa)). A disulfide bridge connects residues cysteine 108 and cysteine 350. Residues cysteine 115, cysteine 119, and cysteine 122 each coordinate [4Fe-4S] cluster. S-adenosyl-L-methionine contacts are provided by residues 176–177 (GE), serine 208, 230–232 (SLH), and asparagine 307. Cysteine 350 acts as the S-methylcysteine intermediate in catalysis.

It belongs to the radical SAM superfamily. RlmN family. [4Fe-4S] cluster serves as cofactor.

The protein localises to the cytoplasm. The catalysed reaction is adenosine(2503) in 23S rRNA + 2 reduced [2Fe-2S]-[ferredoxin] + 2 S-adenosyl-L-methionine = 2-methyladenosine(2503) in 23S rRNA + 5'-deoxyadenosine + L-methionine + 2 oxidized [2Fe-2S]-[ferredoxin] + S-adenosyl-L-homocysteine. It catalyses the reaction adenosine(37) in tRNA + 2 reduced [2Fe-2S]-[ferredoxin] + 2 S-adenosyl-L-methionine = 2-methyladenosine(37) in tRNA + 5'-deoxyadenosine + L-methionine + 2 oxidized [2Fe-2S]-[ferredoxin] + S-adenosyl-L-homocysteine. In terms of biological role, specifically methylates position 2 of adenine 2503 in 23S rRNA and position 2 of adenine 37 in tRNAs. m2A2503 modification seems to play a crucial role in the proofreading step occurring at the peptidyl transferase center and thus would serve to optimize ribosomal fidelity. This is Dual-specificity RNA methyltransferase RlmN from Burkholderia cenocepacia (strain HI2424).